The chain runs to 309 residues: Taste receptor type 2 member 46 (309 aa).

Met-1 is a topological domain (extracellular). The chain crosses the membrane as a helical span at residues 2-22 (ITFLPIIFSILIVVTFVIGNF). The Cytoplasmic segment spans residues 23–46 (ANGFIALANSIEWFKRQKISFADQ). The chain crosses the membrane as a helical span at residues 47-67 (ILTALAVSRVGLLWVLLLNWY). Residues 68 to 86 (ATELNPAFYSIEVRITAYN) lie on the Extracellular side of the membrane. A helical membrane pass occupies residues 87–107 (LWAVINHFSNWLATSLSIFYL). Topologically, residues 108–126 (LKIANFSNLIFLRLKRRVK) are cytoplasmic. Residues 127–147 (SVVLVILLGPLLFLVCHLFVI) traverse the membrane as a helical segment. At 148 to 178 (NMNQIIWTKEYEGNMTWKIKLRSAMYLSNIT) the chain is on the extracellular side. Asn-161 and Asn-176 each carry an N-linked (GlcNAc...) asparagine glycan. Residues 179 to 199 (VTILANLVPFTLTLISFLLLI) form a helical membrane-spanning segment. Residues 200 to 229 (CSLCKHLKKMQLHGKGSQDPSMKVHIKALQ) lie on the Cytoplasmic side of the membrane. Residues 230–250 (TVTSFLLLCAIYFLSIIMSVW) form a helical membrane-spanning segment. The Extracellular portion of the chain corresponds to 251–259 (SFESLENKP). Residues 260–280 (VFMFCEAITFSYPSTHPFILI) traverse the membrane as a helical segment. The Cytoplasmic portion of the chain corresponds to 281-309 (WGNKKLKQTFLSVLWHVRYWVKGEEPSSP).

This sequence belongs to the G-protein coupled receptor T2R family.

The protein resides in the membrane. The protein localises to the cell projection. Its subcellular location is the cilium membrane. Its function is as follows. Receptor that may play a role in the perception of bitterness and is gustducin-linked. May play a role in sensing the chemical composition of the gastrointestinal content. The activity of this receptor may stimulate alpha gustducin, mediate PLC-beta-2 activation and lead to the gating of TRPM5. In airway epithelial cells, binding of bitter compounds increases the intracellular calcium ion concentration and stimulates ciliary beat frequency. The protein is Taste receptor type 2 member 46 (TAS2R46) of Pan paniscus (Pygmy chimpanzee).